The sequence spans 495 residues: Rho GTPase-activating protein 19 (495 aa).

A Rho-GAP domain is found at 98-304 (MSLKRKEKGV…FMIKHSQKLF (207 aa)). Disordered stretches follow at residues 327-362 (KDDL…ETQQ) and 393-495 (KHPS…SSSL). 3 stretches are compositionally biased toward basic and acidic residues: residues 350–362 (SRLD…ETQQ), 433–452 (QERK…KENV), and 470–481 (KSLEGQKEESCR).

Its function is as follows. GTPase activator for the Rho-type GTPases by converting them to an inactive GDP-bound state. The polypeptide is Rho GTPase-activating protein 19 (ARHGAP19) (Gallus gallus (Chicken)).